We begin with the raw amino-acid sequence, 453 residues long: Cholesterol 7-desaturase nvd (453 aa).

The chain crosses the membrane as a helical span at residues 53–73; sequence IVEYILILTLMFAFSAILYVI. The Rieske domain maps to 126–229; that stretch reads WFAVAETREL…VVETDGAIWI (104 aa). Positions 167, 169, 187, and 190 each coordinate [2Fe-2S] cluster.

Belongs to the cholesterol 7-desaturase family. [2Fe-2S] cluster serves as cofactor.

It is found in the membrane. The enzyme catalyses cholesterol + NADPH + O2 + H(+) = 7-dehydrocholesterol + NADP(+) + 2 H2O. The catalysed reaction is cholesterol + NADH + O2 + H(+) = 7-dehydrocholesterol + NAD(+) + 2 H2O. It participates in steroid hormone biosynthesis; dafachronic acid biosynthesis. Catalyzes the production of 7-dehydrocholesterol (7-DHC or cholesta-5,7-dien-3beta-ol) by inserting a double bond (desaturating) at the C7-C8 single bond of cholesterol. Essential regulator of steroid biosynthesis as this reaction is the first step in the synthesis of the steroid hormone Delta(7)-dafachronic acid. This Bombyx mori (Silk moth) protein is Cholesterol 7-desaturase nvd.